We begin with the raw amino-acid sequence, 258 residues long: Acyl-[acyl-carrier-protein]--UDP-N-acetylglucosamine O-acyltransferase (258 aa).

The protein belongs to the transferase hexapeptide repeat family. LpxA subfamily. In terms of assembly, homotrimer.

Its subcellular location is the cytoplasm. It catalyses the reaction a (3R)-hydroxyacyl-[ACP] + UDP-N-acetyl-alpha-D-glucosamine = a UDP-3-O-[(3R)-3-hydroxyacyl]-N-acetyl-alpha-D-glucosamine + holo-[ACP]. It participates in glycolipid biosynthesis; lipid IV(A) biosynthesis; lipid IV(A) from (3R)-3-hydroxytetradecanoyl-[acyl-carrier-protein] and UDP-N-acetyl-alpha-D-glucosamine: step 1/6. Functionally, involved in the biosynthesis of lipid A, a phosphorylated glycolipid that anchors the lipopolysaccharide to the outer membrane of the cell. The polypeptide is Acyl-[acyl-carrier-protein]--UDP-N-acetylglucosamine O-acyltransferase (Ectopseudomonas mendocina (strain ymp) (Pseudomonas mendocina)).